The following is a 305-amino-acid chain: UDP-3-O-acyl-N-acetylglucosamine deacetylase (305 aa).

Zn(2+) is bound by residues His-79, His-238, and Asp-242. Catalysis depends on His-265, which acts as the Proton donor.

This sequence belongs to the LpxC family. It depends on Zn(2+) as a cofactor.

It carries out the reaction a UDP-3-O-[(3R)-3-hydroxyacyl]-N-acetyl-alpha-D-glucosamine + H2O = a UDP-3-O-[(3R)-3-hydroxyacyl]-alpha-D-glucosamine + acetate. Its pathway is glycolipid biosynthesis; lipid IV(A) biosynthesis; lipid IV(A) from (3R)-3-hydroxytetradecanoyl-[acyl-carrier-protein] and UDP-N-acetyl-alpha-D-glucosamine: step 2/6. Its function is as follows. Catalyzes the hydrolysis of UDP-3-O-myristoyl-N-acetylglucosamine to form UDP-3-O-myristoylglucosamine and acetate, the committed step in lipid A biosynthesis. The protein is UDP-3-O-acyl-N-acetylglucosamine deacetylase of Haemophilus influenzae (strain PittGG).